Here is a 293-residue protein sequence, read N- to C-terminus: ATP synthase gamma chain (293 aa).

The protein belongs to the ATPase gamma chain family. As to quaternary structure, F-type ATPases have 2 components, CF(1) - the catalytic core - and CF(0) - the membrane proton channel. CF(1) has five subunits: alpha(3), beta(3), gamma(1), delta(1), epsilon(1). CF(0) has three main subunits: a, b and c.

The protein localises to the cell inner membrane. Produces ATP from ADP in the presence of a proton gradient across the membrane. The gamma chain is believed to be important in regulating ATPase activity and the flow of protons through the CF(0) complex. The chain is ATP synthase gamma chain from Psychrobacter arcticus (strain DSM 17307 / VKM B-2377 / 273-4).